Here is a 451-residue protein sequence, read N- to C-terminus: MAAKVADDVANLKLDDSNTKPASGAAENGDKPTGDAEHEDSDDDNEAEEGAPEAGEGAAKKKKKRKPRKKKKAGAAGAGGAKTQTAPPRVRIDEVFPNDSYPEGEIQEYVNENAYRTTNEEKRHLDRMNNDFLTEYRKGAEIHREVRQWAQKWIKPGMGLTEIAEGIEDSVRALTGHQGLGNGDAQIAGMGFPTGLSINHCAAHYTPNAGNKMVVNYEDVMKVDFGVHINGRIVDSAFTLTFDPVYDNLVNACKAATNAGIKEAGIDVRMSDIGAAIQEVMESYEVEIKGEMLPVKCIRNLNGHSIGHYTIHGGKTVPIVKGGDQTKMEEGETFAIETFGSTGKGYVRDDMETSHYAMKADAPKVALRVSSAKTLLNSITKNFGTLPFCRRYLDRMGHDKYLLGLNNLVSAGIVEAYPPLCDIKGSYTAQSEHTFVLRPTCKEVLSRGDDY.

Residues 1 to 101 (MAAKVADDVA…IDEVFPNDSY (101 aa)) form a disordered region. The span at 37 to 51 (EHEDSDDDNEAEEGA) shows a compositional bias: acidic residues. Positions 60-73 (KKKKKRKPRKKKKA) are enriched in basic residues. His204 provides a ligand contact to substrate. Positions 224, 235, and 304 each coordinate a divalent metal cation. Position 312 (His312) interacts with substrate. 2 residues coordinate a divalent metal cation: Glu337 and Glu432.

Belongs to the peptidase M24A family. Methionine aminopeptidase eukaryotic type 2 subfamily. Co(2+) serves as cofactor. Zn(2+) is required as a cofactor. The cofactor is Mn(2+). Requires Fe(2+) as cofactor.

The protein resides in the cytoplasm. The catalysed reaction is Release of N-terminal amino acids, preferentially methionine, from peptides and arylamides.. Functionally, cotranslationally removes the N-terminal methionine from nascent proteins. The N-terminal methionine is often cleaved when the second residue in the primary sequence is small and uncharged (Met-Ala-, Cys, Gly, Pro, Ser, Thr, or Val). This chain is Methionine aminopeptidase 2-2, found in Pyrenophora tritici-repentis (strain Pt-1C-BFP) (Wheat tan spot fungus).